A 360-amino-acid chain; its full sequence is Aminomethyltransferase (360 aa).

This sequence belongs to the GcvT family. In terms of assembly, the glycine cleavage system is composed of four proteins: P, T, L and H.

The catalysed reaction is N(6)-[(R)-S(8)-aminomethyldihydrolipoyl]-L-lysyl-[protein] + (6S)-5,6,7,8-tetrahydrofolate = N(6)-[(R)-dihydrolipoyl]-L-lysyl-[protein] + (6R)-5,10-methylene-5,6,7,8-tetrahydrofolate + NH4(+). Functionally, the glycine cleavage system catalyzes the degradation of glycine. The sequence is that of Aminomethyltransferase from Bdellovibrio bacteriovorus (strain ATCC 15356 / DSM 50701 / NCIMB 9529 / HD100).